Reading from the N-terminus, the 430-residue chain is Cortical fragment-lytic enzyme (430 aa).

LysM domains follow at residues glutamine 3–valine 47 and asparagine 52–isoleucine 96. In terms of domain architecture, GH18 spans valine 104–glycine 430. Residue glutamate 219 is the Proton donor of the active site.

Belongs to the glycosyl hydrolase 18 family. Chitinase class II subfamily.

Its subcellular location is the forespore. In terms of biological role, N-acetylglucosaminidase involved in cortex peptidoglycan degradation during germination. Cleaves only partially degraded spore peptidoglycans. Recognizes muramic acid delta-lactam residues specific to spore peptidoglycans. In Bacillus anthracis, this protein is Cortical fragment-lytic enzyme.